The following is a 507-amino-acid chain: Myocyte-specific enhancer factor 2A (507 aa).

The 55-residue stretch at 3–57 (RKKIQITRIMDERNRQVTFTKRKFGLMKKAYELSVLCDCEIALIIFNSSNKLFQY) folds into the MADS-box domain. Phosphoserine is present on Lys30. The mef2-type DNA-binding region spans 58–86 (ASTDMDKVLLKYTEYNEPHESRTNSDIVE). The residue at position 59 (Ser59) is a Phosphoserine; by CK2. Ser98 carries the phosphoserine modification. Residues 173–183 (TLTDSSMLSPP) show a composition bias toward low complexity. The segment at 173 to 229 (TLTDSSMLSPPQTTLHRNVSPGAPQRPPSTGNAGGMLSTTDLTVPNGAGSSPVGNGF) is disordered. Residues 209-229 (LSTTDLTVPNGAGSSPVGNGF) show a composition bias toward polar residues. Ser235 is subject to Phosphoserine. The segment at 243 to 270 (GANSLGKVMPTKSPPPPGGGNLGMNSRK) is disordered. Lys249 carries the post-translational modification N6-acetyllysine. Ser255 carries the post-translational modification Phosphoserine; by MAPK14. A required for interaction with MAPKs region spans residues 266–283 (MNSRKPDLRVVIPPSSKG). The segment at 289 to 296 (SEEEELEL) is beta domain. Thr312 and Thr319 each carry phosphothreonine; by MAPK7 and MAPK14. Position 312 is a phosphothreonine; by NLK (Thr312). Ser355 carries the phosphoserine; by MAPK7 modification. The segment at 397 to 507 (NQNISIKSEP…KRMRMDAWVT (111 aa)) is disordered. Lys403 bears the N6-acetyllysine; alternate mark. Residue Lys403 forms a Glycyl lysine isopeptide (Lys-Gly) (interchain with G-Cter in SUMO); alternate linkage. Ser408 carries the phosphoserine; by CDK5 modification. Thr415 is subject to Phosphothreonine. Over residues 420–429 (QQQQQQQQQQ) the composition is skewed to low complexity. A compositionally biased stretch (pro residues) spans 430 to 445 (QPPPPPQPQPQPPQPQ). A Phosphoserine; by MAPK modification is found at Ser453. Over residues 453 to 466 (SPVDSLSSSSSSYD) the composition is skewed to low complexity. Composition is skewed to basic and acidic residues over residues 467 to 477 (GSDREDPRGDF) and 488 to 507 (NTED…AWVT).

The protein belongs to the MEF2 family. In terms of assembly, binds DNA as a homo- or heterodimer. Dimerizes with MEF2D. Interacts with HDAC7. Interacts with PIAS1; the interaction enhances sumoylation. Interacts with HDAC4, HDAC9 and SLC2A4RG. Interacts (via the N-terminal) with MAPK7; the interaction results in the phosphorylation and transcriptional activity of MEF2A. In terms of processing, constitutive phosphorylation on Ser-408 promotes Lys-403 sumoylation thus preventing acetylation at this site. Dephosphorylation on Ser-408 by PPP3CA upon neuron depolarization promotes a switch from sumoylation to acetylation on residue Lys-403 leading to inhibition of dendrite claw differentiation. Phosphorylation on Thr-312 and Thr-319 are the main sites involved in p38 MAPK signaling and activate transcription. Phosphorylated on these sites by MAPK14/p38alpha and MAPK11/p38beta, but not by MAPK13/p38delta nor by MAPK12/p38gamma. Phosphorylation on Ser-408 by CDK5 induced by neurotoxicity inhibits MEF2A transcriptional activation leading to apoptosis of cortical neurons. Phosphorylation on Thr-312, Thr-319 and Ser-355 can be induced by EGF. Post-translationally, sumoylation on Lys-403 is enhanced by PIAS1 and represses transcriptional activity. Phosphorylation on Ser-408 is required for sumoylation. Has no effect on nuclear location nor on DNA binding. Sumoylated with SUMO1 and, to a lesser extent with SUMO2 and SUMO3. PIASx facilitates sumoylation in postsynaptic dendrites in the cerebellar cortex and promotes their morphogenesis. Acetylation on Lys-403 activates transcriptional activity. Acetylated by p300 on several sites in diffentiating myocytes. Acetylation on Lys-4 increases DNA binding and transactivation. Hyperacetylation by p300 leads to enhanced cardiac myocyte growth and heart failure. In terms of processing, proteolytically cleaved in cerebellar granule neurons on several sites by caspase 3 and caspase 7 following neurotoxicity. Preferentially cleaves the CDK5-mediated hyperphosphorylated form which leads to neuron apoptosis and transcriptional inactivation. In terms of tissue distribution, isoform MEF2 and isoform MEFA are expressed only in skeletal and cardiac muscle and in the brain. Isoform RSRFC4 and isoform RSRFC9 are expressed in all tissues examined.

The protein resides in the nucleus. Functionally, transcriptional activator which binds specifically to the MEF2 element, 5'-YTA[AT](4)TAR-3', found in numerous muscle-specific genes. Also involved in the activation of numerous growth factor- and stress-induced genes. Mediates cellular functions not only in skeletal and cardiac muscle development, but also in neuronal differentiation and survival. Plays diverse roles in the control of cell growth, survival and apoptosis via p38 MAPK signaling in muscle-specific and/or growth factor-related transcription. In cerebellar granule neurons, phosphorylated and sumoylated MEF2A represses transcription of NUR77 promoting synaptic differentiation. Associates with chromatin to the ZNF16 promoter. The chain is Myocyte-specific enhancer factor 2A (MEF2A) from Homo sapiens (Human).